Here is a 178-residue protein sequence, read N- to C-terminus: Protein GrpE (178 aa).

Belongs to the GrpE family. Homodimer.

It localises to the cytoplasm. Its function is as follows. Participates actively in the response to hyperosmotic and heat shock by preventing the aggregation of stress-denatured proteins, in association with DnaK and GrpE. It is the nucleotide exchange factor for DnaK and may function as a thermosensor. Unfolded proteins bind initially to DnaJ; upon interaction with the DnaJ-bound protein, DnaK hydrolyzes its bound ATP, resulting in the formation of a stable complex. GrpE releases ADP from DnaK; ATP binding to DnaK triggers the release of the substrate protein, thus completing the reaction cycle. Several rounds of ATP-dependent interactions between DnaJ, DnaK and GrpE are required for fully efficient folding. The chain is Protein GrpE from Rickettsia akari (strain Hartford).